The chain runs to 431 residues: MTKQIMPITLSYEPAAACWGEKALISSSEQGVMVHLVGKGKLGAVQRAGRKIDGQGIRHVALVGEGWDLEKSWAFWQGFRAPKGNRSIEWPQLPAAEKQELESRIKIIDWVRDTINMSAEELGPEQLAKRAIDLMCGMACESVSYRIIKGEDLREQGYTGIHTVGRGSSRDPILLALDYNPTGNPQAPVFACLVGKGVTFDTGGYSLKQSSFMDSMKSDMGGAATLTGALALAISRGLKQRVKLFLCIADNMVSGNAFKLGDVIHYRNGKSVEVMNTDAEGRLVLADGLIDASKEKAKLIIDAATLTGAAKTAVGNDYHSVLSFDDKLADDLLTAAASENELFWRLPLAEFHRSQLPSNFADLNNVAASPHTAGASTAAAFLSHFVEEYQKGWIHIDCSATYRKSAVEHWSAGATGYGVRSIANLLLAKAK.

Lys-196 and Asp-201 together coordinate Mn(2+). The active site involves Lys-208. Asp-219, Asp-278, and Glu-280 together coordinate Mn(2+). Arg-282 is an active-site residue.

It belongs to the peptidase M17 family. Homohexamer. It depends on Mn(2+) as a cofactor.

The protein resides in the cytoplasm. It carries out the reaction Release of an N-terminal amino acid, Xaa, from a peptide or arylamide. Xaa is preferably Glu or Asp but may be other amino acids, including Leu, Met, His, Cys and Gln.. Probably plays an important role in intracellular peptide degradation. In Photorhabdus laumondii subsp. laumondii (strain DSM 15139 / CIP 105565 / TT01) (Photorhabdus luminescens subsp. laumondii), this protein is Peptidase B.